The sequence spans 319 residues: Telomere-binding protein cav (319 aa).

The required for binding to Su(var)205 stretch occupies residues 107–312 (RRKMVQPYPE…SISFQNSGSE (206 aa)). Disordered stretches follow at residues 141-163 (WQKQKRRNQSAHATQPDSQDNEV) and 186-248 (PSDL…PDYY). Short sequence motifs (su(var)205-binding Pro-containing repeat) lie at residues 220-224 (PETQM) and 273-279 (PETEMNE). Residues 291–311 (SMSIGPSINSDGSISFQNSGS) show a composition bias toward polar residues. A disordered region spans residues 291–319 (SMSIGPSINSDGSISFQNSGSEPIDVDVN).

In terms of assembly, interacts (via C-terminus) with Su(var)205 dimer (via hinge and chromoshadow domain) and with moi to form the terminin, telomere-capping, complex. Interacts with HP6, which is also part of the terminin complex.

It is found in the nucleus. It localises to the chromosome. The protein resides in the telomere. Its function is as follows. Binds to chromosome ends in a sequence-dependent manner and is required for telomere capping. The protein is Telomere-binding protein cav of Drosophila yakuba (Fruit fly).